A 98-amino-acid chain; its full sequence is Putative protein adenylyltransferase MJ1217 (98 aa).

The GSX(10)DXD motif motif lies at 31–45 (GSYAREEQKETSDID). The Mg(2+) site is built by aspartate 43, aspartate 45, and aspartate 75.

Belongs to the MntA antitoxin family. Probably forms a complex with cognate toxin MJ1216. Mg(2+) serves as cofactor.

It catalyses the reaction L-tyrosyl-[protein] + ATP = O-(5'-adenylyl)-L-tyrosyl-[protein] + diphosphate. The enzyme catalyses O-(5'-adenylyl)-L-tyrosyl-[protein] + ATP = O-[5'-(adenylyl-(5'-&gt;3')-adenylyl)]-L-tyrosyl-[protein] + diphosphate. Probable antitoxin component of a putative type VII toxin-antitoxin (TA) system. Neutralizes cognate toxic MJ1216 by di-AMPylation. In Methanocaldococcus jannaschii (strain ATCC 43067 / DSM 2661 / JAL-1 / JCM 10045 / NBRC 100440) (Methanococcus jannaschii), this protein is Putative protein adenylyltransferase MJ1217.